Here is a 729-residue protein sequence, read N- to C-terminus: Fatty acid oxidation complex subunit alpha (729 aa).

The interval 1-189 (MLYKGDTLYL…KIGLVDGVVK (189 aa)) is enoyl-CoA hydratase/isomerase. Position 296 (D296) interacts with substrate. The interval 311–729 (ETPKQAAVLG…ARPVGDLKTA (419 aa)) is 3-hydroxyacyl-CoA dehydrogenase. NAD(+) contacts are provided by residues M324, D343, 400-402 (VVE), K407, and S429. The active-site For 3-hydroxyacyl-CoA dehydrogenase activity is the H450. N453 provides a ligand contact to NAD(+). Positions 500 and 660 each coordinate substrate. A disordered region spans residues 708–729 (RHNEPYYPPVEPARPVGDLKTA).

In the N-terminal section; belongs to the enoyl-CoA hydratase/isomerase family. It in the C-terminal section; belongs to the 3-hydroxyacyl-CoA dehydrogenase family. As to quaternary structure, heterotetramer of two alpha chains (FadB) and two beta chains (FadA).

It carries out the reaction a (3S)-3-hydroxyacyl-CoA + NAD(+) = a 3-oxoacyl-CoA + NADH + H(+). The catalysed reaction is a (3S)-3-hydroxyacyl-CoA = a (2E)-enoyl-CoA + H2O. The enzyme catalyses a 4-saturated-(3S)-3-hydroxyacyl-CoA = a (3E)-enoyl-CoA + H2O. It catalyses the reaction (3S)-3-hydroxybutanoyl-CoA = (3R)-3-hydroxybutanoyl-CoA. It carries out the reaction a (3Z)-enoyl-CoA = a 4-saturated (2E)-enoyl-CoA. The catalysed reaction is a (3E)-enoyl-CoA = a 4-saturated (2E)-enoyl-CoA. It participates in lipid metabolism; fatty acid beta-oxidation. In terms of biological role, involved in the aerobic and anaerobic degradation of long-chain fatty acids via beta-oxidation cycle. Catalyzes the formation of 3-oxoacyl-CoA from enoyl-CoA via L-3-hydroxyacyl-CoA. It can also use D-3-hydroxyacyl-CoA and cis-3-enoyl-CoA as substrate. This Escherichia coli O6:H1 (strain CFT073 / ATCC 700928 / UPEC) protein is Fatty acid oxidation complex subunit alpha.